The primary structure comprises 162 residues: MRLNFLVTTMALLVAFPPPYECRAIDSSSNQPVTDPDEERQSPAVLARMGEEYFIRLGNRNKNSPRSPPDTYPEASQYSKRALQLQLTQRVLEGKVGNVGRWDGNYALRALDSEERERRSEEPPISLDLTFHLLREVLEMARAEQLVQQAHSNRKMMEIFGK.

The signal sequence occupies residues 1–24 (MRLNFLVTTMALLVAFPPPYECRA). Residues 25–119 (IDSSSNQPVT…ALDSEERERR (95 aa)) constitute a propeptide that is removed on maturation. The segment at 57–79 (LGNRNKNSPRSPPDTYPEASQYS) is disordered. Position 160 is a phenylalanine amide (F160).

Belongs to the sauvagine/corticotropin-releasing factor/urotensin I family.

The protein localises to the secreted. This hormone from hypothalamus regulates the release of corticotropin from pituitary gland. The polypeptide is Corticoliberin-2 (crf2) (Catostomus commersonii (White sucker)).